The primary structure comprises 158 residues: Phosphopantetheine adenylyltransferase (158 aa).

Residue T10 participates in substrate binding. ATP contacts are provided by residues 10–11 (TF) and H18. Residues K42, L74, and R88 each coordinate substrate. Residues 89-91 (GLR), E99, and 124-130 (NSFISST) contribute to the ATP site.

It belongs to the bacterial CoaD family. Homohexamer. The cofactor is Mg(2+).

The protein localises to the cytoplasm. The enzyme catalyses (R)-4'-phosphopantetheine + ATP + H(+) = 3'-dephospho-CoA + diphosphate. Its pathway is cofactor biosynthesis; coenzyme A biosynthesis; CoA from (R)-pantothenate: step 4/5. Reversibly transfers an adenylyl group from ATP to 4'-phosphopantetheine, yielding dephospho-CoA (dPCoA) and pyrophosphate. The sequence is that of Phosphopantetheine adenylyltransferase from Shewanella loihica (strain ATCC BAA-1088 / PV-4).